Consider the following 1311-residue polypeptide: Cyclin-G-associated kinase (1311 aa).

Ser-2 carries the post-translational modification N-acetylserine. Ser-2 and Ser-16 each carry phosphoserine. A Protein kinase domain is found at 40–314; that stretch reads LRVRRVLAEG…SIAEVVHQLQ (275 aa). Asp-173 serves as the catalytic Proton acceptor. The 168-residue stretch at 399-566 folds into the Phosphatase tensin-type domain; sequence SVANYAKGDL…EYMCDMVAEE (168 aa). Phosphoserine is present on Ser-456. One can recognise a C2 tensin-type domain in the interval 572-710; the sequence is SKPILVRAVV…FQVNLEVEVE (139 aa). Disordered regions lie at residues 709–729 and 749–788; these read VEPRDRPSREAPPWENSSMRG and FGKPELPRQPGSTAQYDAGAGSPEAEPTDSDSPPSSSADA. Residue Ser-770 is modified to Phosphoserine. A compositionally biased stretch (low complexity) spans 770-788; that stretch reads SPEAEPTDSDSPPSSSADA. At Thr-776 the chain carries Phosphothreonine. Ser-783 bears the Phosphoserine mark. Thr-794 is subject to Phosphothreonine. Disordered stretches follow at residues 801–860, 913–1035, and 1047–1150; these read KEAE…VQQD, CLLG…DLLG, and AVAP…PNYA. A phosphoserine mark is found at Ser-811, Ser-826, Ser-829, Ser-834, and Ser-939. Low complexity-rich tracts occupy residues 925 to 939 and 950 to 966; these read PPEDLLSEDPLLLAS and PRGGPPAAADPFGPLLP. 2 stretches are compositionally biased toward polar residues: residues 967–976 and 1070–1080; these read SSGNNSQPCS and SQASWTKSQNP. Ser-1096 is modified (phosphoserine). Residues 1109-1124 show a composition bias toward polar residues; it reads TATTPKGSSSWQTSRP. Position 1123 is an omega-N-methylarginine (Arg-1123). Ser-1176 and Ser-1185 each carry phosphoserine. The J domain occupies 1247 to 1311; that stretch reads SRWTPVGMAD…FENQGSRPLF (65 aa).

Belongs to the protein kinase superfamily. Ser/Thr protein kinase family. In terms of tissue distribution, ubiquitous. Highest in testis.

Its subcellular location is the cytoplasm. It is found in the perinuclear region. It localises to the golgi apparatus. The protein localises to the trans-Golgi network. The protein resides in the cell junction. Its subcellular location is the focal adhesion. It is found in the cytoplasmic vesicle. It localises to the clathrin-coated vesicle. It carries out the reaction L-seryl-[protein] + ATP = O-phospho-L-seryl-[protein] + ADP + H(+). The enzyme catalyses L-threonyl-[protein] + ATP = O-phospho-L-threonyl-[protein] + ADP + H(+). Its function is as follows. Associates with cyclin G and CDK5. Seems to act as an auxilin homolog that is involved in the uncoating of clathrin-coated vesicles by Hsc70 in non-neuronal cells. Expression oscillates slightly during the cell cycle, peaking at G1. May play a role in clathrin-mediated endocytosis and intracellular trafficking, and in the dynamics of clathrin assembly/disassembly. In Homo sapiens (Human), this protein is Cyclin-G-associated kinase.